We begin with the raw amino-acid sequence, 436 residues long: 3-ketoacyl-CoA thiolase (436 aa).

The active-site Acyl-thioester intermediate is cysteine 99. Residues histidine 392 and cysteine 422 each act as proton acceptor in the active site.

The protein belongs to the thiolase-like superfamily. Thiolase family. Heterotetramer of two alpha chains (FadJ) and two beta chains (FadI).

It localises to the cytoplasm. It carries out the reaction an acyl-CoA + acetyl-CoA = a 3-oxoacyl-CoA + CoA. The protein operates within lipid metabolism; fatty acid beta-oxidation. Its function is as follows. Catalyzes the final step of fatty acid oxidation in which acetyl-CoA is released and the CoA ester of a fatty acid two carbons shorter is formed. The protein is 3-ketoacyl-CoA thiolase of Salmonella typhimurium (strain LT2 / SGSC1412 / ATCC 700720).